The chain runs to 236 residues: MPGGPGLLQALCATTFLLFLISAGGLGPGSQALWVDGGPPSMTVSLGETARLQCLHNRSRLSSKLNITWWRVLQGNATWPDIFLSYGKGPNGELTIDTVNKSHMGMYRCQVEEKDLNQKILSSQQSCGTYLRVRERLPRPFLDMGEGTKNNIITAEGIILLFCAVVPGTLLLFRKRWQNMKFGVDAQDDYEDENLYEGLNLDDCSMYEDISRGLQGTYQDVGSLHIGDGDVQLEKP.

The N-terminal stretch at 1-32 (MPGGPGLLQALCATTFLLFLISAGGLGPGSQA) is a signal peptide. In terms of domain architecture, Ig-like C2-type spans 33-122 (LWVDGGPPSM…EKDLNQKILS (90 aa)). Over 33–151 (LWVDGGPPSM…LDMGEGTKNN (119 aa)) the chain is Extracellular. Cys54 and Cys109 form a disulfide bridge. N-linked (GlcNAc...) asparagine glycans are attached at residues Asn66 and Asn76. The helical transmembrane segment at 152–172 (IITAEGIILLFCAVVPGTLLL) threads the bilayer. Residues 173–236 (FRKRWQNMKF…GDGDVQLEKP (64 aa)) are Cytoplasmic-facing. Positions 185–213 (DAQDDYEDENLYEGLNLDDCSMYEDISRG) constitute an ITAM domain. Phosphotyrosine; by SRC-type Tyr-kinases is present on Tyr196. The residue at position 207 (Tyr207) is a Phosphotyrosine. The residue at position 212 (Arg212) is an Asymmetric dimethylarginine; by PRMT1. Tyr218 carries the post-translational modification Phosphotyrosine; by Tyr-kinases.

In terms of assembly, heterodimer of alpha and beta chains; disulfide-linked. Part of the B-cell antigen receptor complex where the alpha/beta chain heterodimer is non-covalently associated with an antigen-specific membrane-bound surface immunoglobulin of two heavy chains and two light chains. Interacts through its phosphorylated ITAM domain with the SH2 domains of SYK which stimulates SYK autophosphorylation and activation. Also interacts, when phosphorylated on Tyr-207, with the SH2 domain of BLNK/SLP65, bringing BLNK into proximity with SYK and allowing SYK to phosphorylate BLNK which is necessary for trafficking of the BCR to late endosomes. Interacts with Src-family tyrosine kinases including FYN and LYN, increasing their activity. In terms of processing, phosphorylated on tyrosine, serine and threonine residues upon B-cell activation. Phosphorylation of tyrosine residues by Src-family kinases, including LYN, is an early and essential feature of the BCR signaling cascade. The phosphorylated tyrosines serve as docking sites for SH2-domain containing kinases, leading to their activation which in turn leads to phosphorylation of downstream targets. Phosphorylation of serine and threonine residues may prevent subsequent tyrosine phosphorylation. Arginine methylation in the ITAM domain may interfere with the binding of SYK. It promotes signals leading to B-cell differentiation.

The protein localises to the cell membrane. Functionally, required in cooperation with CD79B for initiation of the signal transduction cascade activated by binding of antigen to the B-cell antigen receptor complex (BCR) which leads to internalization of the complex, trafficking to late endosomes and antigen presentation. Also required for BCR surface expression and for efficient differentiation of pro- and pre-B-cells. Stimulates SYK autophosphorylation and activation. Binds to BLNK, bringing BLNK into proximity with SYK and allowing SYK to phosphorylate BLNK. Also interacts with and increases activity of some Src-family tyrosine kinases. Represses BCR signaling during development of immature B-cells. The sequence is that of B-cell antigen receptor complex-associated protein alpha chain (CD79A) from Canis lupus familiaris (Dog).